A 348-amino-acid polypeptide reads, in one-letter code: Ferrochelatase (348 aa).

2 residues coordinate Fe cation: His-218 and Glu-299.

The protein belongs to the ferrochelatase family.

The protein resides in the cytoplasm. The catalysed reaction is heme b + 2 H(+) = protoporphyrin IX + Fe(2+). It participates in porphyrin-containing compound metabolism; protoheme biosynthesis; protoheme from protoporphyrin-IX: step 1/1. Its function is as follows. Catalyzes the ferrous insertion into protoporphyrin IX. The chain is Ferrochelatase from Methylocella silvestris (strain DSM 15510 / CIP 108128 / LMG 27833 / NCIMB 13906 / BL2).